A 293-amino-acid chain; its full sequence is tRNA-cytidine(32) 2-sulfurtransferase (293 aa).

Residues 62–67 carry the PP-loop motif motif; that stretch reads SGGKDS. [4Fe-4S] cluster contacts are provided by C137, C140, and C228.

Belongs to the TtcA family. As to quaternary structure, homodimer. Mg(2+) is required as a cofactor. Requires [4Fe-4S] cluster as cofactor.

The protein resides in the cytoplasm. The enzyme catalyses cytidine(32) in tRNA + S-sulfanyl-L-cysteinyl-[cysteine desulfurase] + AH2 + ATP = 2-thiocytidine(32) in tRNA + L-cysteinyl-[cysteine desulfurase] + A + AMP + diphosphate + H(+). It participates in tRNA modification. Its function is as follows. Catalyzes the ATP-dependent 2-thiolation of cytidine in position 32 of tRNA, to form 2-thiocytidine (s(2)C32). The sulfur atoms are provided by the cysteine/cysteine desulfurase (IscS) system. In Brucella suis (strain ATCC 23445 / NCTC 10510), this protein is tRNA-cytidine(32) 2-sulfurtransferase.